Here is a 1806-residue protein sequence, read N- to C-terminus: MPVYTPQSGSLPEYSKMKLLYFSNELPKDDLQGLFRRLYNHSKDRRYPLLARFIHEATLAVREEVRQLPTAVKALVPAFETVLNLADYPELRKGPLGGSLEGVLLCVLEIATLIGHVPRLYFKEAADCCSYYENASERFDLHAVSTYLAGLGLGLLSTAAVALCSALADVPVIGAEVVRVSFRLGTLVDEISQNLEPRDTSGSPDTWASVVPGAKVEEVQAELDAIHAREKTPQPSKIFISAWNEGSVTISGPPSRIRRVLRLSEFFRRHRVVSLPVYSGLCHAKHLYNEQHAREIISTRSMDSINALYSPAIPVYQTSTGRPFTASTAKGLFEQLVLELLTQPILWDNVVQGVVDQAYATSATSCDVLVFRISVPINDLRTALGSKLQGFETSTEELIPWILQKSDMEIPRGTAQSKIAIIGMSCRMPGGATDTEKFWELLEQGLDVARKIPADRFDVETHYDPKGKRVNTSHTPYGCFIDEPGLFDAPFFNMSPREAQQTDPMQRLAIVTAYEALERAGYVANRTPATNLHRIGTFYGQASDDYREVNTAQEISTYFIPGGCRAFGPGRINYFFKFSGPSFSCDTACSSSLATIQAACTSLWNGDTDMVVAGGMNVLTNSDAFAGLSHGHFLSKTPGACKTWDVNADGYCRADGIGSIVMKRLEDAEADNDNIIGIIRAAATNHSAEAISITHPHAGAQAYLYRQVMSSAGIDPLDVSFVEMHGTGTQAGDSVEITSITDIFAPITKRRSAQQPLHIGAVKANVGHGEAVAGVTALLKVLLMYQKNAIPPHVGIKNSLNPLFPKDLDKRNLHIPYQKVPWPRVKGKKRYAVVNNFSAAGGNTTVCLEEPPLRETDYVDPRTAHVVNVSAKSKISFKKNLERLVAYLDANPDTSLASLSYTTTARRYHHNHRASVAATDIAQVKKKLLSYIDKVEAHKPIPATGPPQVAFAFTGQGASYKSMNLELFHHSPYFRSQLLHLDALAQGQGFPSFIPAVDGSHEKDYAHSPVVTQLALVSVEIALAKYWISLGVKPNAVVGHSLGEYAAFHVAGVLSASDALFLVGRRAQLLEEKCQIGSHKMLAVRAPLADIEKALEGTNYEVACINGPKETVLSGSQAQVEVVSEILQSVGYRCTSLDVAFAFHSSQTEAILDDFEEAAKDGVLFRAPNMPVISPLLGKVIFDDKTITAKYMRRATRETVNFLSALEMAQTFSTVDEETVWVEIGPHPVCMGFVNATLPAVNETVASMKRGEDNWVTLCNSLTALHCAGVPIEWNEYQRPFEKGLRLLDLPTYAWNDKTYWIQYNGDWALTKGNTFYDAEKSLKAQQTGQLASVPSGLRTSTVQQIIEESFNGSAGKVVMQSDMMQPDFLDAAHGHKMNGCGVVTSSIHGDIGFTLGGYLYKNLVKGGKAPDMNMANLVVLRGLVAQKNTKKPQYIRVTISTTDINSGVAELIWQNVLNDNTADEPFASASILYDDAALWLKSWIPSTHLVQGRIEALERLAEDGIANRFTRNMAYLLFANNLVDYAQKYRGMQSVVLHELEAFADITLSTEKSGTWTIPPYFIDSVAHLAGFVMNVSDAIDTKANYCVTPGWKSLRFAKPLVAGAKYRSYVKMIQTEEDPTVYLGDVYIMQDGAIIGMCGGIQFRRYPRILLNRFFTAPEEAGAISHAAASSTPAPRTKPEPVPVATPATAAAPVAQSPAAPASVTPAPAPAPAPGPTPAAAPAAAGESDSVAAKALVLIAKEAALELSDLTDDASFANLGVDSLMSLVIAEKFREELGVTVTGSLFLEYPTIGDLRSWLLEYYN.

Residues 30–283 (DLQGLFRRLY…SLPVYSGLCH (254 aa)) form an N-terminal acylcarrier protein transacylase domain (SAT) region. Residues 416–850 (QSKIAIIGMS…GGNTTVCLEE (435 aa)) enclose the Ketosynthase family 3 (KS3) domain. Catalysis depends on for beta-ketoacyl synthase activity residues cysteine 589, histidine 725, and histidine 768. Residues 951–1270 (FAFTGQGASY…SLTALHCAGV (320 aa)) form a malonyl-CoA:ACP transacylase (MAT) domain region. A product template (PT) domain region spans residues 1340 to 1659 (TSTVQQIIEE…RILLNRFFTA (320 aa)). Positions 1344 to 1479 (QQIIEESFNG…ASILYDDAAL (136 aa)) are N-terminal hotdog fold. A PKS/mFAS DH domain is found at 1344-1654 (QQIIEESFNG…FRRYPRILLN (311 aa)). The active-site Proton acceptor; for dehydratase activity is the histidine 1376. The segment at 1506 to 1654 (IANRFTRNMA…FRRYPRILLN (149 aa)) is C-terminal hotdog fold. The Proton donor; for dehydratase activity role is filled by aspartate 1565. The segment at 1668 to 1726 (HAAASSTPAPRTKPEPVPVATPATAAAPVAQSPAAPASVTPAPAPAPAPGPTPAAAPAA) is disordered. Low complexity predominate over residues 1685-1708 (PVATPATAAAPVAQSPAAPASVTP). Positions 1709–1721 (APAPAPAPGPTPA) are enriched in pro residues. The Carrier domain occupies 1728–1805 (GESDSVAAKA…DLRSWLLEYY (78 aa)). O-(pantetheine 4'-phosphoryl)serine is present on serine 1765.

The catalysed reaction is holo-[ACP] + 8 malonyl-CoA + 8 H(+) = atrochrysone carboxyl-[ACP] + 8 CO2 + 8 CoA + 2 H2O. Its pathway is secondary metabolite biosynthesis. Its function is as follows. Atrochrysone carboxylic acid synthase; part of the gene cluster that mediates the biosynthesis of monodictyphenone, a prenyl xanthone derivative. The pathway begins with the synthesis of atrochrysone thioester by the polyketide synthase (PKS) mdpG. The atrochrysone carboxyl ACP thioesterase mdpF then breaks the thioester bond and releases the atrochrysone carboxylic acid from mdpG. The atrochrysone carboxylic acid is then converted to atrochrysone which is further transformed into emodin anthrone. The next step is performed by the anthrone oxygenase mdpH that catalyzes the oxidation of emodinanthrone to emodin. Emodin is further modified to yield monodictyphenone via several steps involving mdpB, mdpC mdpJ, mdpK and mdpL. The short chain dehydrogenase mdpC converts the tautomers of emodin hydroquinone into the 3-hydroxy-3,4-dihydroan-thracen-1(2H)-one derivative. These enzymes with xptA, xptB and xptC are also proposed to be involved in the synthesis of shamixanthone from emodin. Especially, direct reduction of emodin by the short chain dehydrogenase mdpC followed by dehydration catalyzed by the scytalone dehydratase-like protein mdpB gives loss of oxygen and formation of chrysophanol intermediate in two simple steps. This is Atrochrysone carboxylic acid synthase from Emericella nidulans (strain FGSC A4 / ATCC 38163 / CBS 112.46 / NRRL 194 / M139) (Aspergillus nidulans).